Here is a 313-residue protein sequence, read N- to C-terminus: Porphobilinogen deaminase 2 (313 aa).

Cys246 carries the S-(dipyrrolylmethanemethyl)cysteine modification.

The protein belongs to the HMBS family. As to quaternary structure, monomer. Requires dipyrromethane as cofactor.

It catalyses the reaction 4 porphobilinogen + H2O = hydroxymethylbilane + 4 NH4(+). The protein operates within porphyrin-containing compound metabolism; protoporphyrin-IX biosynthesis; coproporphyrinogen-III from 5-aminolevulinate: step 2/4. Tetrapolymerization of the monopyrrole PBG into the hydroxymethylbilane pre-uroporphyrinogen in several discrete steps. The protein is Porphobilinogen deaminase 2 (hemC2) of Streptomyces coelicolor (strain ATCC BAA-471 / A3(2) / M145).